The sequence spans 384 residues: Alanine racemase (384 aa).

Lysine 39 acts as the Proton acceptor; specific for D-alanine in catalysis. Lysine 39 bears the N6-(pyridoxal phosphate)lysine mark. Arginine 138 serves as a coordination point for substrate. Tyrosine 265 (proton acceptor; specific for L-alanine) is an active-site residue. Substrate is bound at residue methionine 312.

This sequence belongs to the alanine racemase family. Pyridoxal 5'-phosphate is required as a cofactor.

It catalyses the reaction L-alanine = D-alanine. It participates in amino-acid biosynthesis; D-alanine biosynthesis; D-alanine from L-alanine: step 1/1. Functionally, catalyzes the interconversion of L-alanine and D-alanine. May also act on other amino acids. The sequence is that of Alanine racemase (alr) from Staphylococcus carnosus (strain TM300).